The following is a 420-amino-acid chain: MLDKNLLKTNSKEIREQLKSRSFNLDWYDEFLRLEKQLSTLLRTIEKLNEQKNINAKKAATTESDAQRKKLIQEGGLLRAELEKNEAKYNEIKEDFDYIYQRIPNLPTEDVPIGKDEKENVEMFKSRKPTFFDFKPLPHYELATKLEMIGLDVASKITGSRFSIYKKDGARLMRAIQQFCLYVNADKYEEYLPPVIVNKDSYYGSGQFPKFVEDVFKLEGTNYYLASTAEVQLVNLHRNEILKEADLPKYYTASTACFRSEAGSAGKDTKGLIRQHQFYKTELVKIVHPSTSKQEHEAMAKDAEKILELLELPYRRMVLCTGDMGFSATKTYDLEVWIPSENKYREISSISNCGDFQARRANIKFKDAISKKNLYVHTLNASALAHDRLFVAIVENYQQKDGSIKIPKALVKYFGKEYIK.

L-serine is bound at residue 228 to 230 (TAE). 259–261 (RSE) is an ATP binding site. Residue glutamate 282 coordinates L-serine. 346 to 349 (EISS) provides a ligand contact to ATP. An L-serine-binding site is contributed by serine 382.

Belongs to the class-II aminoacyl-tRNA synthetase family. Type-1 seryl-tRNA synthetase subfamily. As to quaternary structure, homodimer. The tRNA molecule binds across the dimer.

It localises to the cytoplasm. It carries out the reaction tRNA(Ser) + L-serine + ATP = L-seryl-tRNA(Ser) + AMP + diphosphate + H(+). It catalyses the reaction tRNA(Sec) + L-serine + ATP = L-seryl-tRNA(Sec) + AMP + diphosphate + H(+). It participates in aminoacyl-tRNA biosynthesis; selenocysteinyl-tRNA(Sec) biosynthesis; L-seryl-tRNA(Sec) from L-serine and tRNA(Sec): step 1/1. Functionally, catalyzes the attachment of serine to tRNA(Ser). Is also able to aminoacylate tRNA(Sec) with serine, to form the misacylated tRNA L-seryl-tRNA(Sec), which will be further converted into selenocysteinyl-tRNA(Sec). This Mycoplasmoides gallisepticum (strain R(low / passage 15 / clone 2)) (Mycoplasma gallisepticum) protein is Serine--tRNA ligase.